Here is a 148-residue protein sequence, read N- to C-terminus: Sec-independent protein translocase protein TatB (148 aa).

A helical membrane pass occupies residues 1–21 (MFDIGFWELVVIGIVALVVLG).

The protein belongs to the TatB family. As to quaternary structure, the Tat system comprises two distinct complexes: a TatABC complex, containing multiple copies of TatA, TatB and TatC subunits, and a separate TatA complex, containing only TatA subunits. Substrates initially bind to the TatABC complex, which probably triggers association of the separate TatA complex to form the active translocon.

Its subcellular location is the cell inner membrane. Part of the twin-arginine translocation (Tat) system that transports large folded proteins containing a characteristic twin-arginine motif in their signal peptide across membranes. Together with TatC, TatB is part of a receptor directly interacting with Tat signal peptides. TatB may form an oligomeric binding site that transiently accommodates folded Tat precursor proteins before their translocation. This chain is Sec-independent protein translocase protein TatB, found in Aeromonas salmonicida (strain A449).